We begin with the raw amino-acid sequence, 285 residues long: Biotin synthase (285 aa).

The 222-residue stretch at 2 to 223 folds into the Radical SAM core domain; the sequence is STRKQIFLCA…RRAHTLLGED (222 aa). Cys20, Cys24, and Cys27 together coordinate [4Fe-4S] cluster. Cys64, Cys99, and Cys157 together coordinate [2Fe-2S] cluster.

The protein belongs to the radical SAM superfamily. Biotin synthase family. Homodimer. Requires [4Fe-4S] cluster as cofactor. [2Fe-2S] cluster is required as a cofactor.

The enzyme catalyses (4R,5S)-dethiobiotin + (sulfur carrier)-SH + 2 reduced [2Fe-2S]-[ferredoxin] + 2 S-adenosyl-L-methionine = (sulfur carrier)-H + biotin + 2 5'-deoxyadenosine + 2 L-methionine + 2 oxidized [2Fe-2S]-[ferredoxin]. The protein operates within cofactor biosynthesis; biotin biosynthesis; biotin from 7,8-diaminononanoate: step 2/2. Catalyzes the conversion of dethiobiotin (DTB) to biotin by the insertion of a sulfur atom into dethiobiotin via a radical-based mechanism. The sequence is that of Biotin synthase from Sulfurovum sp. (strain NBC37-1).